The chain runs to 254 residues: Pre-miRNA 5'-monophosphate methyltransferase (254 aa).

In terms of domain architecture, Bin3-type SAM spans 34–254; the sequence is ENRLSLIPEA…DRSLLLFRRQ (221 aa). S-adenosyl-L-methionine is bound by residues R36, N66, D99, and 124-125; that span reads DI.

The protein belongs to the methyltransferase superfamily.

The protein resides in the cytoplasm. The catalysed reaction is a 5'-end 5'-phospho-ribonucleoside-RNA + S-adenosyl-L-methionine = a 5'-end (5'-methylphospho)-ribonucleoside-RNA + S-adenosyl-L-homocysteine. It catalyses the reaction a 5'-end 5'-phospho-ribonucleoside-RNA + 2 S-adenosyl-L-methionine = a 5'-end (5'-bismethylphospho)-ribonucleoside-RNA + 2 S-adenosyl-L-homocysteine. Functionally, O-methyltransferase that specifically monomethylates 5'-monophosphate of cytoplasmic histidyl tRNA (tRNA(His)), acting as a capping enzyme by protecting tRNA(His) from cleavage by DICER1. Also able, with less efficiently, to methylate the 5' monophosphate of a subset of pre-miRNAs, acting as a negative regulator of miRNA processing. The 5' monophosphate of pre-miRNAs is recognized by DICER1 and is required for pre-miRNAs processing: methylation at this position reduces the processing of pre-miRNAs by DICER1. Was also reported to mediate dimethylation of pre-miR-145; however dimethylation cannot be reproduced by another group which observes a monomethylation of pre-miR-145. The protein is Pre-miRNA 5'-monophosphate methyltransferase (bcdin3d) of Danio rerio (Zebrafish).